We begin with the raw amino-acid sequence, 287 residues long: ATP synthase gamma chain (287 aa).

This sequence belongs to the ATPase gamma chain family. F-type ATPases have 2 components, CF(1) - the catalytic core - and CF(0) - the membrane proton channel. CF(1) has five subunits: alpha(3), beta(3), gamma(1), delta(1), epsilon(1). CF(0) has three main subunits: a, b and c.

Its subcellular location is the cell membrane. Its function is as follows. Produces ATP from ADP in the presence of a proton gradient across the membrane. The gamma chain is believed to be important in regulating ATPase activity and the flow of protons through the CF(0) complex. This chain is ATP synthase gamma chain, found in Geobacillus stearothermophilus (Bacillus stearothermophilus).